We begin with the raw amino-acid sequence, 267 residues long: Tryptophan synthase alpha chain (267 aa).

Catalysis depends on proton acceptor residues E49 and D60.

It belongs to the TrpA family. Tetramer of two alpha and two beta chains.

The catalysed reaction is (1S,2R)-1-C-(indol-3-yl)glycerol 3-phosphate + L-serine = D-glyceraldehyde 3-phosphate + L-tryptophan + H2O. The protein operates within amino-acid biosynthesis; L-tryptophan biosynthesis; L-tryptophan from chorismate: step 5/5. The alpha subunit is responsible for the aldol cleavage of indoleglycerol phosphate to indole and glyceraldehyde 3-phosphate. This is Tryptophan synthase alpha chain from Geotalea uraniireducens (strain Rf4) (Geobacter uraniireducens).